A 212-amino-acid chain; its full sequence is Probable GTP-binding protein EngB (212 aa).

The 173-residue stretch at 38 to 210 (SLPEIAFVGK…KASLAKCIKP (173 aa)) folds into the EngB-type G domain. GTP contacts are provided by residues 46 to 53 (GKSNVGKS), 73 to 77 (GRTRQ), 91 to 94 (DLPG), 158 to 161 (TKSD), and 189 to 191 (VSN). Positions 53 and 75 each coordinate Mg(2+).

It belongs to the TRAFAC class TrmE-Era-EngA-EngB-Septin-like GTPase superfamily. EngB GTPase family. Requires Mg(2+) as cofactor.

Functionally, necessary for normal cell division and for the maintenance of normal septation. The protein is Probable GTP-binding protein EngB of Rickettsia conorii (strain ATCC VR-613 / Malish 7).